Here is a 137-residue protein sequence, read N- to C-terminus: MLPLSLLKTAQNHPMLVELKNGETYNGHLVSCDNWMNINLREVICTSRDGDKFWRMPECYIRGSTIKYLRIPDEIIDMVREEAAKGRGRGGPQQKQQKGRGMGGAGRGVFGGRGRGGIPGAGRGQPEKKPGRQAGKQ.

Residue Met1 is modified to N-acetylmethionine. The Sm domain maps to 2 to 75; it reads LPLSLLKTAQ…IKYLRIPDEI (74 aa). The segment at 82 to 137 is disordered; sequence EAAKGRGRGGPQQKQQKGRGMGGAGRGVFGGRGRGGIPGAGRGQPEKKPGRQAGKQ. A compositionally biased stretch (gly residues) spans 100 to 123; sequence RGMGGAGRGVFGGRGRGGIPGAGR.

The protein belongs to the snRNP Sm proteins family. As to quaternary structure, component of the precatalytic spliceosome (spliceosome B complex). Component of the U4/U6-U5 tri-snRNP complex, a building block of the precatalytic spliceosome (spliceosome B complex). The U4/U6-U5 tri-snRNP complex is composed of the U4, U6 and U5 snRNAs and at least PRPF3, PRPF4, PRPF6, PRPF8, PRPF31, SNRNP200, TXNL4A, SNRNP40, SNRPB, SNRPD1, SNRPD2, SNRPD3, SNRPE, SNRPF, SNRPG, DDX23, CD2BP2, PPIH, SNU13, EFTUD2, SART1 and USP39, plus LSM2, LSM3, LSM4, LSM5, LSM6, LSM7 and LSM8. LSM2, LSM3, LSM4, LSM5, LSM6, LSM7 and LSM8 form a heptameric, ring-shaped subcomplex (the LSM2-8 complex) that is part of the U4/U6-U5 tri-snRNP complex and the precatalytic spliceosome. In terms of tissue distribution, ubiquitous.

The protein resides in the nucleus. Its function is as follows. Plays a role in pre-mRNA splicing as component of the U4/U6-U5 tri-snRNP complex that is involved in spliceosome assembly, and as component of the precatalytic spliceosome (spliceosome B complex). The heptameric LSM2-8 complex binds specifically to the 3'-terminal U-tract of U6 snRNA. This Mus musculus (Mouse) protein is U6 snRNA-associated Sm-like protein LSm4 (Lsm4).